The chain runs to 186 residues: MEKNNLKKILQEKMEKAIKVLGNELKGLRTGRASVNFLDSVTVEAYGSKVPLAQVASLSTPDARTINVQVWDKSMVSSVEKGITIANLGLTHATDGQLIRLPIPSLTEERRKEFVKLAHKYGEETKISLRNIRRDGIEELKKLEKDNIIVKDEYHSLSEQVQKLTDEYSSKVDSAIKQKEHEIMTV.

The protein belongs to the RRF family.

The protein resides in the cytoplasm. Functionally, responsible for the release of ribosomes from messenger RNA at the termination of protein biosynthesis. May increase the efficiency of translation by recycling ribosomes from one round of translation to another. This is Ribosome-recycling factor from Rickettsia typhi (strain ATCC VR-144 / Wilmington).